The following is a 254-amino-acid chain: Nickel import ATP-binding protein NikD (254 aa).

Residues 2-241 enclose the ABC transporter domain; sequence PQQIELRNIA…PKHTVTRSLV (240 aa). Position 36–43 (36–43) interacts with ATP; sequence GGSGSGKS.

Belongs to the ABC transporter superfamily. Nickel importer (TC 3.A.1.5.3) family. In terms of assembly, the complex is composed of two ATP-binding proteins (NikD and NikE), two transmembrane proteins (NikB and NikC) and a solute-binding protein (NikA).

Its subcellular location is the cell inner membrane. The enzyme catalyses Ni(2+)(out) + ATP + H2O = Ni(2+)(in) + ADP + phosphate + H(+). Functionally, part of the ABC transporter complex NikABCDE involved in nickel import. Responsible for energy coupling to the transport system. The polypeptide is Nickel import ATP-binding protein NikD (Shigella boydii serotype 4 (strain Sb227)).